The chain runs to 224 residues: Peptide deformylase 3 (224 aa).

Fe cation contacts are provided by C135 and H177. Residue E178 is part of the active site. Fe cation is bound at residue H181.

It belongs to the polypeptide deformylase family. Requires Fe(2+) as cofactor.

It carries out the reaction N-terminal N-formyl-L-methionyl-[peptide] + H2O = N-terminal L-methionyl-[peptide] + formate. Removes the formyl group from the N-terminal Met of newly synthesized proteins. Requires at least a dipeptide for an efficient rate of reaction. N-terminal L-methionine is a prerequisite for activity but the enzyme has broad specificity at other positions. This is Peptide deformylase 3 from Streptomyces avermitilis (strain ATCC 31267 / DSM 46492 / JCM 5070 / NBRC 14893 / NCIMB 12804 / NRRL 8165 / MA-4680).